Consider the following 505-residue polypeptide: Xylose import ATP-binding protein XylG (505 aa).

ABC transporter domains are found at residues L6–E243 and V262–K505. Residue G38 to S45 participates in ATP binding.

It belongs to the ABC transporter superfamily. Xylose importer (TC 3.A.1.2.4) family. The complex is composed of two ATP-binding proteins (XylG), two transmembrane proteins (XylH) and a solute-binding protein (XylF).

The protein localises to the cell membrane. It carries out the reaction D-xylose(out) + ATP + H2O = D-xylose(in) + ADP + phosphate + H(+). Its function is as follows. Part of the ABC transporter complex XylFGH involved in xylose import. Responsible for energy coupling to the transport system. This Thermoanaerobacter pseudethanolicus (strain ATCC 33223 / 39E) (Clostridium thermohydrosulfuricum) protein is Xylose import ATP-binding protein XylG.